Here is a 76-residue protein sequence, read N- to C-terminus: UPF0346 protein LBUL_1194 (76 aa).

It belongs to the UPF0346 family.

This Lactobacillus delbrueckii subsp. bulgaricus (strain ATCC BAA-365 / Lb-18) protein is UPF0346 protein LBUL_1194.